Consider the following 34-residue polypeptide: Phospholipase A2 (34 aa).

Residue His18 is part of the active site. Position 19 (Asp19) interacts with Ca(2+).

The protein belongs to the phospholipase A2 family. Group I subfamily. D49 sub-subfamily. It depends on Ca(2+) as a cofactor. Post-translationally, contains 7 disulfide bonds. In terms of tissue distribution, expressed by the venom gland.

The protein localises to the secreted. The enzyme catalyses a 1,2-diacyl-sn-glycero-3-phosphocholine + H2O = a 1-acyl-sn-glycero-3-phosphocholine + a fatty acid + H(+). Snake venom phospholipase A2 (PLA2) that strongly inhibits platelet aggregation and has a strong anticoagulant activity. PLA2 catalyzes the calcium-dependent hydrolysis of the 2-acyl groups in 3-sn-phosphoglycerides. The sequence is that of Phospholipase A2 from Pseudechis papuanus (Papuan black snake).